The following is a 233-amino-acid chain: uncharacterized protein (233 aa).

H64, H66, D68, H69, H143, D162, and H212 together coordinate Zn(2+).

The protein belongs to the metallo-beta-lactamase superfamily. Glyoxalase II family. Zn(2+) is required as a cofactor.

This is an uncharacterized protein from Bacillus subtilis (strain 168).